Consider the following 569-residue polypeptide: Proline--tRNA ligase (569 aa).

Belongs to the class-II aminoacyl-tRNA synthetase family. ProS type 1 subfamily. As to quaternary structure, homodimer.

It localises to the cytoplasm. It carries out the reaction tRNA(Pro) + L-proline + ATP = L-prolyl-tRNA(Pro) + AMP + diphosphate. Catalyzes the attachment of proline to tRNA(Pro) in a two-step reaction: proline is first activated by ATP to form Pro-AMP and then transferred to the acceptor end of tRNA(Pro). As ProRS can inadvertently accommodate and process non-cognate amino acids such as alanine and cysteine, to avoid such errors it has two additional distinct editing activities against alanine. One activity is designated as 'pretransfer' editing and involves the tRNA(Pro)-independent hydrolysis of activated Ala-AMP. The other activity is designated 'posttransfer' editing and involves deacylation of mischarged Ala-tRNA(Pro). The misacylated Cys-tRNA(Pro) is not edited by ProRS. This is Proline--tRNA ligase from Nitrosospira multiformis (strain ATCC 25196 / NCIMB 11849 / C 71).